Reading from the N-terminus, the 90-residue chain is Small ribosomal subunit protein bS16 (90 aa).

This sequence belongs to the bacterial ribosomal protein bS16 family.

The polypeptide is Small ribosomal subunit protein bS16 (Shouchella clausii (strain KSM-K16) (Alkalihalobacillus clausii)).